The following is a 1094-amino-acid chain: Protein phosphatase 2C and cyclic nucleotide-binding/kinase domain-containing protein (1094 aa).

The PPM-type phosphatase domain occupies 107–397 (RCSFLSQRGY…DDITIIVVHI (291 aa)). Mn(2+) is bound by residues D148, G149, D344, and D388. A nucleoside 3',5'-cyclic phosphate is bound by residues 491-616 (LFRK…RSVD) and 617-758 (LLSR…RHSS). Positions 785–1038 (TTCLSTTDCS…PESIKKHPWF (254 aa)) constitute a Protein kinase domain. ATP is bound by residues 791–799 (TDCSEIGLV) and K811.

It in the N-terminal section; belongs to the PP2C family. This sequence in the C-terminal section; belongs to the protein kinase superfamily. AGC Ser/Thr protein kinase family. Requires Mg(2+) as cofactor. It depends on Mn(2+) as a cofactor.

The enzyme catalyses O-phospho-L-seryl-[protein] + H2O = L-seryl-[protein] + phosphate. The catalysed reaction is O-phospho-L-threonyl-[protein] + H2O = L-threonyl-[protein] + phosphate. The chain is Protein phosphatase 2C and cyclic nucleotide-binding/kinase domain-containing protein from Arabidopsis thaliana (Mouse-ear cress).